A 112-amino-acid chain; its full sequence is uncharacterized protein (112 aa).

This is an uncharacterized protein from Escherichia coli.